The sequence spans 166 residues: Photosystem I assembly protein Ycf3 (166 aa).

TPR repeat units follow at residues 35–68, 72–105, and 120–153; these read AFTYYRDGMAAQAEGEYAEALQNYYQALRLEIDP, SYILYNIGLIYTCNGEHGRALEYYYQALERNPSL, and GEQAIERGQSEISKLLFDKAADYWKEAIRLAPTN.

The protein belongs to the Ycf3 family.

The protein localises to the plastid. It localises to the chloroplast thylakoid membrane. In terms of biological role, essential for the assembly of the photosystem I (PSI) complex. May act as a chaperone-like factor to guide the assembly of the PSI subunits. In Oltmannsiellopsis viridis (Marine flagellate), this protein is Photosystem I assembly protein Ycf3.